Here is an 888-residue protein sequence, read N- to C-terminus: Alanine--tRNA ligase (888 aa).

Zn(2+)-binding residues include His573, His577, Cys676, and His680.

The protein belongs to the class-II aminoacyl-tRNA synthetase family. Zn(2+) serves as cofactor.

It localises to the cytoplasm. The enzyme catalyses tRNA(Ala) + L-alanine + ATP = L-alanyl-tRNA(Ala) + AMP + diphosphate. Catalyzes the attachment of alanine to tRNA(Ala) in a two-step reaction: alanine is first activated by ATP to form Ala-AMP and then transferred to the acceptor end of tRNA(Ala). Also edits incorrectly charged Ser-tRNA(Ala) and Gly-tRNA(Ala) via its editing domain. This chain is Alanine--tRNA ligase, found in Corynebacterium glutamicum (strain R).